Consider the following 229-residue polypeptide: Coiled-coil domain-containing protein 134 (229 aa).

The N-terminal stretch at 1–22 (MDLLQFLAAFSVLLWPGTEVTG) is a signal peptide. N-linked (GlcNAc...) asparagine glycosylation is present at Asn148. The interval 182–229 (FKTDQTEFIPSTDPFQKALREEEKRRKKEERRKEIRKGPRISRSQSEL) is disordered. Residues 196 to 218 (FQKALREEEKRRKKEERRKEIRK) are a coiled coil. The short motif at 226-229 (QSEL) is the Prevents secretion from ER element.

It belongs to the CCDC134 family. As to quaternary structure, interacts with TADA2A. Associates with the PCAF complex via TADA2A binding. Post-translationally, O-glycosylated, with additional sialic acid modifications.

Its subcellular location is the endoplasmic reticulum lumen. It is found in the secreted. The protein resides in the cytoplasm. It localises to the nucleus. Its function is as follows. Molecular adapter required to prevent protein hyperglycosylation of HSP90B1: during translation, associates with nascent HSP90B1 and the STT3A catalytic component of the OST-A complex and tethers them to a specialized translocon that forms a microenvironment for HSP90B1 folding. In the CCDC134-containing translocon, STT3A associates with the SRT pseudosubstrate motif of HSP90B1, preventing access to facultative glycosylation sites until folding is completed, preventing hyperglycosylation and subsequent degradation of HSP90B1. In extracellular secreted form, promotes proliferation and activation of CD8(+) T-cells, suggesting a cytokine-like function. May inhibit ERK and JNK signaling activity. May suppress cell migration and invasion activity, via its effects on ERK and JNK signaling. May also localize in the nucleus: enhances stability of the PCAF histone acetyltransferase (HAT) complex member TADA2A and thus promotes PCAF-mediated histone acetyltransferase activity. Has a critical role in the regulation of osteogenesis and bone development. The sequence is that of Coiled-coil domain-containing protein 134 (Ccdc134) from Mus musculus (Mouse).